Here is a 520-residue protein sequence, read N- to C-terminus: MVDEELFDKSSNDHSISSEEEDMLVRSYSNLNVSFGYHCNSYQCFSLDTDEYDISPNKRLETNTMMTSQNGSFTCLSGAAISANFTLANTNICKGLIGEEILPELDSPNSFRKIVSSPSMSRLDLLSTSQGSPVSTESSIFEISKNIWRSSAPTTVSSNFLTSTEIKMAGGAAGEDRVQAVCSEKNGWLICGIYDGFNGRDAADFLAVTLYDNIVYYLYLLECRIKQENGLYGSPEGSLNGVKSELTLAMRFAENEDVKFSETFRAGVLKCLTTAVEQAENDFLCMVEQEMDDRPDLVSVGSCVLVVLLHGTDLCILNLGDSRAVLASVPSSGMDKLKAVQLTEIHSLENPLEYQKLLADHPNEPSVVMGNKIKGKLKVTRAFGVGYLKQKKLNDALMGILRVRNLCSPPYVYTNPHTVSHKVTEDDLFVVLGSDGLFDFFSNDEVVQLVYQFMHDNPIGDPAKYLIEQLLLKAAKEAALTAEELMRIPVGSRRKYHDDVTIIVIILGNAQRTMTASTSL.

The PPM-type phosphatase domain occupies Phe-160 to Leu-507. Mn(2+)-binding residues include Asp-195, Gly-196, Asp-435, and Asp-498.

Belongs to the PP2C family. It depends on Mg(2+) as a cofactor. Mn(2+) is required as a cofactor.

The enzyme catalyses O-phospho-L-seryl-[protein] + H2O = L-seryl-[protein] + phosphate. The catalysed reaction is O-phospho-L-threonyl-[protein] + H2O = L-threonyl-[protein] + phosphate. The protein is Probable protein phosphatase 2C 39 of Oryza sativa subsp. japonica (Rice).